We begin with the raw amino-acid sequence, 139 residues long: Angiogenin (139 aa).

An N-terminal signal peptide occupies residues 1 to 21 (MAMSSLWWTAILLLALTVSMC). H34 acts as the Proton acceptor in catalysis. 3 disulfide bridges follow: C49-C102, C64-C111, and C82-C126. The tRNA site is built by C102 and V122. Catalysis depends on H133, which acts as the Proton donor.

The protein belongs to the pancreatic ribonuclease family. In terms of assembly, homodimer. Interacts with RNH1; inhibiting ANG ribonuclease activity.

It is found in the secreted. The protein localises to the nucleus. Its subcellular location is the nucleolus. The protein resides in the cytoplasm. It localises to the stress granule. Functionally, secreted ribonuclease that can either promote or restrict cell proliferation of target cells, depending on the context. Endocytosed in target cells via its receptor PLXNB2 and translocates to the cytoplasm or nucleus. Under stress conditions, localizes to the cytoplasm and promotes the assembly of stress granules (SGs): specifically cleaves a subset of tRNAs within anticodon loops to produce tRNA-derived stress-induced fragments (tiRNAs), resulting in translation repression and inhibition of cell proliferation. tiRNas also prevent formation of apoptosome, thereby promoting cell survival. Preferentially cleaves RNAs between a pyrimidine and an adenosine residue, suggesting that it cleaves the anticodon loop of tRNA(Ala) (32-UUAGCAU-38) after positions 33 and 36. Cleaves a subset of tRNAs, including tRNA(Ala), tRNA(Glu), tRNA(Gly), tRNA(Lys), tRNA(Val), tRNA(His), tRNA(Asp) and tRNA(Sec). Under growth conditions and in differentiated cells, translocates to the nucleus and stimulates ribosomal RNA (rRNA) transcription, including that containing the initiation site sequences of 45S rRNA, thereby promoting cell growth and proliferation. Angiogenin induces vascularization of normal and malignant tissues via its ability to promote rRNA transcription. The sequence is that of Angiogenin (ANG) from Gallus gallus (Chicken).